A 210-amino-acid polypeptide reads, in one-letter code: MRCLTTPMLLRALAQAARAGPPGGRSLHSSAVAATYKYVNMQDPEMDMKSVTDRAARTLLWTELFRGLGMTLSYLFREPATINYPFEKGPLSPRFRGEHALRRYPSGEERCIACKLCEAICPAQAITIEAEPRADGSRRTTRYDIDMTKCIYCGFCQEACPVDAIVEGPNFEFSTETHEELLYNKEKLLNNGDKWEAEIAANIQADYLYR.

The transit peptide at 1–34 (MRCLTTPMLLRALAQAARAGPPGGRSLHSSAVAA) directs the protein to the mitochondrion. 2 consecutive 4Fe-4S ferredoxin-type domains span residues 102–131 (RRYP…IEAE) and 141–170 (TRYD…EGPN). 8 residues coordinate [4Fe-4S] cluster: C111, C114, C117, C121, C150, C153, C156, and C160.

This sequence belongs to the complex I 23 kDa subunit family. In terms of assembly, core subunit of respiratory chain NADH dehydrogenase (Complex I) which is composed of 45 different subunits. This is a component of the iron-sulfur (IP) fragment of the enzyme. Interacts with RAB5IF. [4Fe-4S] cluster is required as a cofactor. In terms of tissue distribution, expressed in all tissues with the highest level in heart and skeletal muscle and the lowest level in lung.

It localises to the mitochondrion inner membrane. It carries out the reaction a ubiquinone + NADH + 5 H(+)(in) = a ubiquinol + NAD(+) + 4 H(+)(out). Functionally, core subunit of the mitochondrial membrane respiratory chain NADH dehydrogenase (Complex I) which catalyzes electron transfer from NADH through the respiratory chain, using ubiquinone as an electron acceptor. Essential for the catalytic activity and assembly of complex I. This chain is NADH dehydrogenase [ubiquinone] iron-sulfur protein 8, mitochondrial (NDUFS8), found in Homo sapiens (Human).